A 440-amino-acid polypeptide reads, in one-letter code: Thymidine phosphorylase (440 aa).

It belongs to the thymidine/pyrimidine-nucleoside phosphorylase family. In terms of assembly, homodimer.

It carries out the reaction thymidine + phosphate = 2-deoxy-alpha-D-ribose 1-phosphate + thymine. It participates in pyrimidine metabolism; dTMP biosynthesis via salvage pathway; dTMP from thymine: step 1/2. The enzymes which catalyze the reversible phosphorolysis of pyrimidine nucleosides are involved in the degradation of these compounds and in their utilization as carbon and energy sources, or in the rescue of pyrimidine bases for nucleotide synthesis. The polypeptide is Thymidine phosphorylase (Salmonella arizonae (strain ATCC BAA-731 / CDC346-86 / RSK2980)).